Here is a 646-residue protein sequence, read N- to C-terminus: Cytochrome b translation regulator cbp8 (646 aa).

In terms of assembly, component of a complex, at least composed of cbp7 and cbp8.

It localises to the mitochondrion. In terms of biological role, translation factor for cob1/cytochrome b; plays a role in cob1 mRNA stabilization and required for correct folding of the protein. In Schizosaccharomyces pombe (strain 972 / ATCC 24843) (Fission yeast), this protein is Cytochrome b translation regulator cbp8.